Reading from the N-terminus, the 194-residue chain is MSLDNVVEDIRDEARARAEDIRQDGQEQADEIVAEAEADAEELLESRKADVEQQLEREREQALSSAKLEAKQARLSARRDVLQRVREQVERELAELEGDRREELTRSLLDAAAVEFEDADEVSVYGRADDEELLSSILEDYDGYEFAGERDCLGGVVVEGSNSRVRVNNTFDSVLDTVWEDNLKEVSARLFDDQ.

It belongs to the V-ATPase E subunit family. Has multiple subunits with at least A(3), B(3), C, D, E, F, H, I and proteolipid K(x).

It localises to the cell membrane. Component of the A-type ATP synthase that produces ATP from ADP in the presence of a proton gradient across the membrane. The chain is A-type ATP synthase subunit E from Haloferax volcanii (strain ATCC 29605 / DSM 3757 / JCM 8879 / NBRC 14742 / NCIMB 2012 / VKM B-1768 / DS2) (Halobacterium volcanii).